The chain runs to 317 residues: Ribosomal protein L11 methyltransferase (317 aa).

Residues T158, G179, D201, and N244 each coordinate S-adenosyl-L-methionine.

It belongs to the methyltransferase superfamily. PrmA family.

The protein resides in the cytoplasm. It catalyses the reaction L-lysyl-[protein] + 3 S-adenosyl-L-methionine = N(6),N(6),N(6)-trimethyl-L-lysyl-[protein] + 3 S-adenosyl-L-homocysteine + 3 H(+). Functionally, methylates ribosomal protein L11. In Streptococcus pyogenes serotype M6 (strain ATCC BAA-946 / MGAS10394), this protein is Ribosomal protein L11 methyltransferase.